Here is a 344-residue protein sequence, read N- to C-terminus: Phenylalanine--tRNA ligase alpha subunit (344 aa).

Glutamate 256 lines the Mg(2+) pocket.

Belongs to the class-II aminoacyl-tRNA synthetase family. Phe-tRNA synthetase alpha subunit type 1 subfamily. Tetramer of two alpha and two beta subunits. Requires Mg(2+) as cofactor.

It is found in the cytoplasm. The catalysed reaction is tRNA(Phe) + L-phenylalanine + ATP = L-phenylalanyl-tRNA(Phe) + AMP + diphosphate + H(+). The polypeptide is Phenylalanine--tRNA ligase alpha subunit (Oceanobacillus iheyensis (strain DSM 14371 / CIP 107618 / JCM 11309 / KCTC 3954 / HTE831)).